The primary structure comprises 212 residues: Cytidylate kinase (212 aa).

7–15 (GPAASGKGT) lines the ATP pocket.

Belongs to the cytidylate kinase family. Type 1 subfamily.

It is found in the cytoplasm. The enzyme catalyses CMP + ATP = CDP + ADP. The catalysed reaction is dCMP + ATP = dCDP + ADP. The polypeptide is Cytidylate kinase (Rhodopseudomonas palustris (strain TIE-1)).